A 323-amino-acid polypeptide reads, in one-letter code: tRNA U34 carboxymethyltransferase (323 aa).

Carboxy-S-adenosyl-L-methionine is bound by residues K91, W105, K110, G130, 152–154 (DPT), 181–182 (IE), M196, Y200, and R315.

This sequence belongs to the class I-like SAM-binding methyltransferase superfamily. CmoB family. In terms of assembly, homotetramer.

It catalyses the reaction carboxy-S-adenosyl-L-methionine + 5-hydroxyuridine(34) in tRNA = 5-carboxymethoxyuridine(34) in tRNA + S-adenosyl-L-homocysteine + H(+). Functionally, catalyzes carboxymethyl transfer from carboxy-S-adenosyl-L-methionine (Cx-SAM) to 5-hydroxyuridine (ho5U) to form 5-carboxymethoxyuridine (cmo5U) at position 34 in tRNAs. The protein is tRNA U34 carboxymethyltransferase of Shigella flexneri.